Consider the following 296-residue polypeptide: Glycine N-acyltransferase (296 aa).

Lysine 16 is modified (N6-acetyllysine; alternate). Lysine 16 is subject to N6-succinyllysine; alternate. Position 113 is an N6-acetyllysine (lysine 113). N6-acetyllysine; alternate is present on residues lysine 127, lysine 141, and lysine 142. Residues lysine 127, lysine 141, and lysine 142 each carry the N6-succinyllysine; alternate modification. An N6-acetyllysine mark is found at lysine 159 and lysine 167. Position 169 is an N6-succinyllysine (lysine 169). Lysine 183 and lysine 256 each carry N6-acetyllysine; alternate. Lysine 183 and lysine 256 each carry N6-succinyllysine; alternate. Position 267 is an N6-succinyllysine (lysine 267).

This sequence belongs to the glycine N-acyltransferase family.

It localises to the mitochondrion. It catalyses the reaction an acyl-CoA + glycine = an N-acylglycine + CoA + H(+). The enzyme catalyses benzoyl-CoA + glycine = N-benzoylglycine + CoA + H(+). Functionally, mitochondrial acyltransferase which transfers an acyl group to the N-terminus of glycine and glutamine, although much less efficiently. Can conjugate a multitude of substrates to form a variety of N-acylglycines, thereby detoxify xenobiotics, such as benzoic acid or salicylic acid, and endogenous organic acids, such as isovaleric acid. The sequence is that of Glycine N-acyltransferase (Glyat) from Mus musculus (Mouse).